The following is a 359-amino-acid chain: Tropomodulin-1 (359 aa).

A disordered region spans residues 39–61 (PDNALLPAGLRQKDQTTKAPTGP). A tropomyosin-binding region spans residues 39 to 138 (PDNALLPAGL…CDIAAILGMH (100 aa)).

Belongs to the tropomodulin family. In terms of assembly, binds to the N-terminus of tropomyosin and to actin. Interacts with FLII.

It localises to the cytoplasm. Its subcellular location is the cytoskeleton. Its function is as follows. Blocks the elongation and depolymerization of the actin filaments at the pointed end. The Tmod/TM complex contributes to the formation of the short actin protofilament, which in turn defines the geometry of the membrane skeleton. May play an important role in regulating the organization of actin filaments by preferentially binding to a specific tropomyosin isoform at its N-terminus. This chain is Tropomodulin-1 (TMOD1), found in Bos taurus (Bovine).